A 147-amino-acid polypeptide reads, in one-letter code: Large ribosomal subunit protein uL13 (147 aa).

The protein belongs to the universal ribosomal protein uL13 family. Part of the 50S ribosomal subunit.

Functionally, this protein is one of the early assembly proteins of the 50S ribosomal subunit, although it is not seen to bind rRNA by itself. It is important during the early stages of 50S assembly. The sequence is that of Large ribosomal subunit protein uL13 from Latilactobacillus sakei subsp. sakei (strain 23K) (Lactobacillus sakei subsp. sakei).